An 83-amino-acid chain; its full sequence is Alpha-toxin CvIV4 (83 aa).

The first 19 residues, 1 to 19, serve as a signal peptide directing secretion; that stretch reads MNYFILILVAALLILDVNC. In terms of domain architecture, LCN-type CS-alpha/beta spans 21 to 79; sequence KDGYPVEHSGCKYTCWKNEYCDKVCKDLKGEGGYCYINLTCWCTGLPDNVPLKTNQRCN. 4 disulfides stabilise this stretch: C31-C78, C35-C55, C41-C61, and C45-C63.

The protein belongs to the long (4 C-C) scorpion toxin superfamily. Sodium channel inhibitor family. Expressed by the venom gland.

The protein resides in the secreted. In terms of biological role, this toxin significantly slows the fast inactivation of Nav1.2/SCN2A (EC(50)=580 nM), Nav1.3/SCN3A (EC(50)=1310 nM), Nav1.4/SCN4A (EC(50)=530 nM), and Nav1.7/SCN9A (EC(50)=1340 nM). The toxin does not affect the peak amplitude of Nav1.7 currents. On all channels cited above, the toxin requires depolarizing potentials to slow channel inactivation. In addition, the toxin has no or very weak effects on the voltage-dependence of steady-state inactivation, and on voltage-dependence of activation. In vivo, it produces paw licking in mice equivalent to the effects of whole venom. This chain is Alpha-toxin CvIV4, found in Centruroides vittatus (Striped bark scorpion).